The chain runs to 847 residues: Leucine--tRNA ligase (847 aa).

The 'HIGH' region signature appears at 43–53 (PYPSGKLHMGH). The 'KMSKS' region signature appears at 607 to 611 (KMSKS). Residue Lys-610 coordinates ATP.

The protein belongs to the class-I aminoacyl-tRNA synthetase family.

It is found in the cytoplasm. It catalyses the reaction tRNA(Leu) + L-leucine + ATP = L-leucyl-tRNA(Leu) + AMP + diphosphate. The chain is Leucine--tRNA ligase from Buchnera aphidicola subsp. Cinara cedri (strain Cc).